Here is a 599-residue protein sequence, read N- to C-terminus: MSMRSQYCGLVTEELLGQSVSLCGWVSRRRDHGGVIFIDLRDREGLVQVVCDPDRAEMFKAAEGVRNEFCLQIKGVVRGRPEGTTNAALKSGKIEVLCHELIVLNPSITPPFQLDDDNLSETTRLTHRVLDLRRPQMQHNLRLRYRVAIEARKYLDSLGFIDIETPMLTKSTPEGARDYLVPSRTNPGQFFALPQSPQLFKQLLMVANFDRYYQIVKCFRDEDLRADRQPEFTQIDCETSFLSEQEIRDLFEDMIRHVFKETIGVTLDEKFPVMLYSEAMRRFGSDKPDLRVKLEFTDLTDAVRDVDFKVFSTPANTKDGRVAAIRVPKGGELSRGDIDSYTEFVRIYGAKGLAWIKVNEVAKGRDGLQSPIVKNLHDEAVKAIIERTGAQDGDIIFFAADRAKVVNDSLGALRLKIGHSEFGKANGLVETGWKPLWVVDFPMFEYDEEDNRYVAAHHPFTSPKDEHLEYLETDPARCLAKAYDMVLNGWEIGGGSVRIHREEVQSKVFRALKINAEEAQAKFGFLLDALQYGAPPHGGIAFGLDRIVTMMAGADSIRDVIAFPKTQRAQCLLTQAPSEVDERQLRELHIRLRQPEPKV.

Glu174 contacts L-aspartate. The segment at 198–201 is aspartate; it reads QLFK. Arg220 is a binding site for L-aspartate. Residues 220–222 and Gln229 each bind ATP; that span reads RDE. His457 is a binding site for L-aspartate. Residue Glu491 coordinates ATP. Arg498 is an L-aspartate binding site. 543–546 lines the ATP pocket; it reads GLDR.

The protein belongs to the class-II aminoacyl-tRNA synthetase family. Type 1 subfamily. Homodimer.

The protein resides in the cytoplasm. It carries out the reaction tRNA(Asx) + L-aspartate + ATP = L-aspartyl-tRNA(Asx) + AMP + diphosphate. In terms of biological role, aspartyl-tRNA synthetase with relaxed tRNA specificity since it is able to aspartylate not only its cognate tRNA(Asp) but also tRNA(Asn). Reaction proceeds in two steps: L-aspartate is first activated by ATP to form Asp-AMP and then transferred to the acceptor end of tRNA(Asp/Asn). The protein is Aspartate--tRNA(Asp/Asn) ligase of Paraburkholderia phytofirmans (strain DSM 17436 / LMG 22146 / PsJN) (Burkholderia phytofirmans).